Reading from the N-terminus, the 313-residue chain is Olfactory receptor 4M2 (313 aa).

At 1 to 25 (METANYTKVTEFVLTGLSQTPEVQL) the chain is on the cytoplasmic side. The chain crosses the membrane as a helical span at residues 26-46 (VLFVIFLSFYLFILPGNILII). The Extracellular portion of the chain corresponds to 47-57 (CTISLDPHLTS). Residues 58–78 (PMYFLLANLAFLDIWYSSITA) form a helical membrane-spanning segment. Topologically, residues 79–97 (PEMLIDFFVERKIISFDEC) are cytoplasmic. A disulfide bond links Cys-97 and Cys-179. A helical membrane pass occupies residues 98–118 (IAQLFFLHFAGASEMFLLTVM). The Extracellular portion of the chain corresponds to 119–142 (AFDLYTAICRPLHYATIMNQRLCC). The helical transmembrane segment at 143-163 (ILVALSWRGGFIHSIIQVALI) threads the bilayer. At 164–204 (VRLPFCGPNELDSYFCDITQVVRIACANTFPEELVMICSSG) the chain is on the cytoplasmic side. The chain crosses the membrane as a helical span at residues 205-225 (LISVVCLIALLMSYAFLLALL). Topologically, residues 226-238 (KKLSGSGENTNRA) are extracellular. Residues 239–259 (VSTCYSHITIVVLMFGPSIYI) traverse the membrane as a helical segment. The Cytoplasmic segment spans residues 260 to 270 (YARPFDSFSLD). A helical transmembrane segment spans residues 271–291 (KVVSVFNTLIFPLHNPIIYTL). Residues 292–313 (RNKEVKAAMRKLVTKYILCKEK) are Extracellular-facing.

It belongs to the G-protein coupled receptor 1 family.

The protein localises to the membrane. Functionally, odorant receptor. The protein is Olfactory receptor 4M2 of Homo sapiens (Human).